A 151-amino-acid chain; its full sequence is 1,4-dihydroxy-2-naphthoyl-CoA hydrolase (151 aa).

Residue D19 is part of the active site.

Belongs to the 4-hydroxybenzoyl-CoA thioesterase family. DHNA-CoA hydrolase subfamily.

The catalysed reaction is 1,4-dihydroxy-2-naphthoyl-CoA + H2O = 1,4-dihydroxy-2-naphthoate + CoA + H(+). Its pathway is cofactor biosynthesis; phylloquinone biosynthesis. It functions in the pathway quinol/quinone metabolism; 1,4-dihydroxy-2-naphthoate biosynthesis; 1,4-dihydroxy-2-naphthoate from chorismate: step 7/7. Functionally, catalyzes the hydrolysis of 1,4-dihydroxy-2-naphthoyl-CoA (DHNA-CoA) to 1,4-dihydroxy-2-naphthoate (DHNA), a reaction involved in phylloquinone (vitamin K1) biosynthesis. The sequence is that of 1,4-dihydroxy-2-naphthoyl-CoA hydrolase from Prochlorococcus marinus (strain MIT 9303).